The following is a 453-amino-acid chain: Putative F-box/FBD/LRR-repeat protein At1g66290 (453 aa).

The segment at 1-28 (MDEDGERRVRTKRSCSPESSDNGSGDEV) is disordered. A compositionally biased stretch (polar residues) spans 14-23 (SCSPESSDNG). Positions 28-81 (VDWISDLPEALIVLVLLNLPTKDVIKTSVLSTKWRNIWRYVPRLDLDNRHFTEF) constitute an F-box domain. LRR repeat units follow at residues 155–179 (SLKL…VLVL), 210–235 (LDNV…SSKS), 246–269 (APKL…NLSS), 305–329 (LSRV…RCEP), and 358–381 (CSNL…IISE). In terms of domain architecture, FBD spans 373 to 423 (RKRTSIISEPRCLLSSLEYVKIEFALDKGKMELVRYLLENSPILKKLTLSL).

This Arabidopsis thaliana (Mouse-ear cress) protein is Putative F-box/FBD/LRR-repeat protein At1g66290.